A 153-amino-acid polypeptide reads, in one-letter code: 6,7-dimethyl-8-ribityllumazine synthase (153 aa).

5-amino-6-(D-ribitylamino)uracil contacts are provided by residues phenylalanine 22, 56 to 58, and 80 to 82; these read AFE and AVI. 85 to 86 contributes to the (2S)-2-hydroxy-3-oxobutyl phosphate binding site; the sequence is ST. Histidine 88 (proton donor) is an active-site residue. Phenylalanine 113 contacts 5-amino-6-(D-ribitylamino)uracil. Arginine 127 lines the (2S)-2-hydroxy-3-oxobutyl phosphate pocket.

Belongs to the DMRL synthase family.

The catalysed reaction is (2S)-2-hydroxy-3-oxobutyl phosphate + 5-amino-6-(D-ribitylamino)uracil = 6,7-dimethyl-8-(1-D-ribityl)lumazine + phosphate + 2 H2O + H(+). Its pathway is cofactor biosynthesis; riboflavin biosynthesis; riboflavin from 2-hydroxy-3-oxobutyl phosphate and 5-amino-6-(D-ribitylamino)uracil: step 1/2. Its function is as follows. Catalyzes the formation of 6,7-dimethyl-8-ribityllumazine by condensation of 5-amino-6-(D-ribitylamino)uracil with 3,4-dihydroxy-2-butanone 4-phosphate. This is the penultimate step in the biosynthesis of riboflavin. The protein is 6,7-dimethyl-8-ribityllumazine synthase of Clostridium botulinum (strain Eklund 17B / Type B).